A 321-amino-acid polypeptide reads, in one-letter code: MKPLALHGHERNITQIKYNRMGDLLFSAAKDTRPTVWYSLNGERLGTYNGHGGAVWCIDVNYDTTQFISGGADNCLRLWDCEKGVTLSKIETKSAVRTCGFSYGGNEIMLSTDRQMGQSCRILIFDVRDNMESPILTIPVDNSKVTAGLWGPLDQFLVTGHENGELCQWDVKSGNKLISVQEHSKQINDIQMYKDSTMFVTASKDTTAKLFDTDSLRHLKTYKTDRPVNSAALSPIKDHVVVGGGQEAMEVTTTSTRVGKFDARFFHVVFEEEIGRVKGHFGPINSLAFHPDGRSYSSGGEDGYVRIHSFDPSYDDIEFEY.

5 WD repeats span residues 8–47 (GHER…RLGT), 50–89 (GHGG…TLSK), 140–179 (VDNS…KLIS), 182–221 (EHSK…HLKT), and 279–318 (GHFG…DDIE).

This sequence belongs to the eIF-3 subunit I family. As to quaternary structure, component of the eukaryotic translation initiation factor 3 (eIF-3) complex.

It localises to the cytoplasm. Component of the eukaryotic translation initiation factor 3 (eIF-3) complex, which is involved in protein synthesis of a specialized repertoire of mRNAs and, together with other initiation factors, stimulates binding of mRNA and methionyl-tRNAi to the 40S ribosome. The eIF-3 complex specifically targets and initiates translation of a subset of mRNAs involved in cell proliferation. This Nematostella vectensis (Starlet sea anemone) protein is Eukaryotic translation initiation factor 3 subunit I.